Here is a 154-residue protein sequence, read N- to C-terminus: SsrA-binding protein (154 aa).

The protein belongs to the SmpB family.

The protein localises to the cytoplasm. In terms of biological role, required for rescue of stalled ribosomes mediated by trans-translation. Binds to transfer-messenger RNA (tmRNA), required for stable association of tmRNA with ribosomes. tmRNA and SmpB together mimic tRNA shape, replacing the anticodon stem-loop with SmpB. tmRNA is encoded by the ssrA gene; the 2 termini fold to resemble tRNA(Ala) and it encodes a 'tag peptide', a short internal open reading frame. During trans-translation Ala-aminoacylated tmRNA acts like a tRNA, entering the A-site of stalled ribosomes, displacing the stalled mRNA. The ribosome then switches to translate the ORF on the tmRNA; the nascent peptide is terminated with the 'tag peptide' encoded by the tmRNA and targeted for degradation. The ribosome is freed to recommence translation, which seems to be the essential function of trans-translation. The chain is SsrA-binding protein from Treponema pallidum (strain Nichols).